Consider the following 221-residue polypeptide: Ras-related protein Rab-28 (221 aa).

Residue S2 is modified to N-acetylserine. S8 carries the phosphoserine modification. 9 residues coordinate GTP: G21, G24, K25, T26, S27, G38, K39, Y41, and T44. Mg(2+) is bound at residue T26. The switch I stretch occupies residues 35–49; that stretch reads ETFGKQYKQTIGLDF. Residues T44 and D68 each contribute to the Mg(2+) site. Residues 68–85 form a switch II region; it reads DIGGQTIGGKMLDKYIYG. Positions 71, 129, 130, 132, 160, and 161 each coordinate GTP. C218 bears the Cysteine methyl ester mark. The S-farnesyl cysteine moiety is linked to residue C218. Positions 219-221 are cleaved as a propeptide — removed in mature form; the sequence is AVQ.

It belongs to the small GTPase superfamily. Rab family. In terms of assembly, interacts (prenylated form) with PDE6D; the interaction promotes RAB28 delivery to the photoreceptor outer segments. Interacts with KCNJ13; the interaction may facilitate cone outer segments phagocytosis. Interacts with RELA; the interaction contributes to RELA transport from cytoplasm to nucleus. The cofactor is Mg(2+). Post-translationally, isoprenylated.

The protein localises to the cell membrane. Its subcellular location is the cytoplasm. It localises to the cytoskeleton. It is found in the cilium basal body. The protein resides in the nucleus. It catalyses the reaction GTP + H2O = GDP + phosphate + H(+). With respect to regulation, regulated by guanine nucleotide exchange factors (GEFs) which promote the exchange of bound GDP for free GTP. Regulated by GTPase activating proteins (GAPs) which increase the GTP hydrolysis activity. Inhibited by GDP dissociation inhibitors (GDIs). The small GTPases Rab are key regulators of intracellular membrane trafficking, from the formation of transport vesicles to their fusion with membranes. Rabs cycle between an inactive GDP-bound form and an active GTP-bound form that is able to recruit to membranes different sets of downstream effectors directly responsible for vesicle formation, movement, tethering and fusion. RAB28 is required for shedding and phagocytosis of cone cell outer segments (OS) discs in the retina. Also participates in nuclear factor kappa-B p65/RELA nuclear transport in endothelial cells. In Bos taurus (Bovine), this protein is Ras-related protein Rab-28 (RAB28).